An 811-amino-acid polypeptide reads, in one-letter code: TLR4 interactor with leucine rich repeats (811 aa).

The first 25 residues, Met-1–Pro-25, serve as a signal peptide directing secretion. One can recognise an LRRNT domain in the interval Val-26–Ser-57. Residues Val-26–Gln-696 are Extracellular-facing. 12 LRR repeats span residues Val-61 to Arg-81, Gln-84 to Lys-105, Arg-108 to Pro-129, Lys-132 to Gly-153, Ser-156 to Pro-177, Asn-180 to Gln-201, Lys-204 to Ala-223, Ser-230 to His-251, Arg-254 to Gly-275, Ala-278 to Pro-299, Ser-302 to His-323, and Arg-326 to Ala-347. Residue Asn-73 is glycosylated (N-linked (GlcNAc...) asparagine). N-linked (GlcNAc...) asparagine glycosylation occurs at Asn-209. One can recognise an LRRCT domain in the interval Asn-359–Asp-416. The interval Leu-484–Arg-549 is disordered. 2 stretches are compositionally biased toward low complexity: residues Gln-492–Ser-508 and Pro-530–Gly-544. N-linked (GlcNAc...) asparagine glycosylation occurs at Asn-589. Residues Leu-697–Trp-717 traverse the membrane as a helical segment. At Ala-718 to Asp-811 the chain is on the cytoplasmic side. Phosphoserine is present on Ser-798.

As to quaternary structure, belongs to the lipopolysaccharide (LPS) receptor, a multi-protein complex containing at least CD14, MD-2 and TLR4. Interacts with TLR4; this interaction is greatly enhanced by LPS stimulation. Interacts with LPS. In terms of processing, N-glycolysaled. Highly expressed in the brain, ovary, small intestine and spleen.

The protein resides in the membrane. In terms of biological role, component of the TLR4 signaling complex. Mediates the innate immune response to bacterial lipopolysaccharide (LPS) leading to cytokine secretion. The sequence is that of TLR4 interactor with leucine rich repeats (TRIL) from Homo sapiens (Human).